The following is a 506-amino-acid chain: MSLTETTATFIYNYWYIIFHLYFYTTSKIIKYHHTTYLMIKFKASPPLNYINKGFFGIQATFTELKHLICHTSIDYAIDQFNNVPFPHVHTFVTKVLGNELIMTKDPENIKVLLRFPVFDKFDYGTRSSAVQPSLGMGIFTLEGENWKATRSVLRNMFDRKSIDKVHDFEPHFKTLQKRIDGKVGYFDIQQEFLKLGLELSIEFIFGQVVSEDVPHYDDFTQAWDRCQDYMMLRLLLGDFYWMANDWRYKQSNQIVQAFCDYLVQKSLENTCNDKFVFVHQLAKHTTNKTFIRDQALSLIMASRDTTAELMAFTILELSRKSHHLGKLREEIDANFGLESPDLLTFDSLRKFKYVQAILNETLRMYPGVPRNMKTAKCTTTLPKGGGPDGQDPILVKKGQSVGFISIATHLDPVLNFGSDAHVFRPDRWFDSSMKNLGCKYLPFNAGPRTCLGQQYTLIEASYLLVRLAQTYETVESHPDSVYPPRKKALINMCAADGVDVKFHRL.

Cys-451 provides a ligand contact to heme.

Belongs to the cytochrome P450 family. It depends on heme as a cofactor.

In terms of biological role, together with an NADPH cytochrome P450 the enzyme system catalyzes the terminal hydroxylation as the first step in the assimilation of alkanes and fatty acids. In Candida tropicalis (Yeast), this protein is Cytochrome P450 52B1 (CYP52B1).